Here is a 1011-residue protein sequence, read N- to C-terminus: Probable beta-galactosidase E (1011 aa).

The N-terminal stretch at 1–19 (MKSLLKRLIALAAAYSVAA) is a signal peptide. The substrate site is built by Y92, N136, A137, E138, and N195. Catalysis depends on E196, which acts as the Proton donor. A glycan (N-linked (GlcNAc...) asparagine) is linked at N202. Y261 is a binding site for substrate. C267 and C316 are oxidised to a cystine. The Nucleophile role is filled by E299. Y365 contacts substrate. N-linked (GlcNAc...) asparagine glycosylation is found at N406, N423, N446, N455, N588, N622, N704, N745, N759, N772, N778, and N913.

Belongs to the glycosyl hydrolase 35 family.

Its subcellular location is the secreted. The enzyme catalyses Hydrolysis of terminal non-reducing beta-D-galactose residues in beta-D-galactosides.. Functionally, cleaves beta-linked terminal galactosyl residues from gangliosides, glycoproteins, and glycosaminoglycans. This is Probable beta-galactosidase E (lacE) from Aspergillus fumigatus (strain CBS 144.89 / FGSC A1163 / CEA10) (Neosartorya fumigata).